Here is a 1211-residue protein sequence, read N- to C-terminus: Diacylglycerol kinase eta (1211 aa).

Positions 1 to 66 (MAGAGSQHHP…QMRTKTSIKE (66 aa)) are disordered. Over residues 19–32 (AGASAVSPTAAGPG) the composition is skewed to low complexity. Polar residues predominate over residues 52–61 (VSTSGQMRTK). Residues 62–155 (TSIKEGQLLK…WISSLKSVQS (94 aa)) enclose the PH domain. 2 Phorbol-ester/DAG-type zinc fingers span residues 172 to 222 (MHNW…TNNC) and 244 to 295 (PHQW…HPVC). A DAGKc domain is found at 325 to 460 (FCVSPLLVFV…LDRWSIMTYE (136 aa)). Disordered regions lie at residues 562–613 (SQAS…KPRE) and 634–694 (KVMD…SVAG). Acidic residues-rich tracts occupy residues 576-589 (PEEDTVESASDESL) and 653-662 (YDTETDEAKE). The segment covering 670–691 (SAKTTSQSPDAQASCGHPQTDS) has biased composition (polar residues). Residues 1143 to 1206 (WGTEEVAAWL…LQGIKELERN (64 aa)) form the SAM domain.

The protein belongs to the eukaryotic diacylglycerol kinase family. As to quaternary structure, interacts with RAF1 and BRAF. Homooligomers. Heterooligomers. Oligomerization through the SAM domain inhibits the diacylglycerol kinase activity. Heterooligomerizes with SAM domain-containing isoforms of DGKD. In terms of assembly, does not form homooligomers. Phosphorylated. Phosphorylation does not inhibit catalytic activity. In terms of tissue distribution, widely expressed. Detected in the granulosa cells of the primary and secondary follicles. Expressed in mature follicles and corpus lutea. Expressed in the oviductal epithelium. In the uterus, strongly expressed in the luminal epithelium. Detected in the uterine glands. Detected in ovary and uterus (at protein level). As to expression, specifically expressed in testis. Detected in the inner area of the testis. Strongly expressed in the secondary spermatocytes and the round spermatids and weakly detected in the primary spermatocytes.

The protein localises to the cytoplasm. The protein resides in the cell membrane. Its subcellular location is the cytoskeleton. The catalysed reaction is a 1,2-diacyl-sn-glycerol + ATP = a 1,2-diacyl-sn-glycero-3-phosphate + ADP + H(+). It catalyses the reaction 1,2-di-(9Z-octadecenoyl)-sn-glycerol + ATP = 1,2-di-(9Z-octadecenoyl)-sn-glycero-3-phosphate + ADP + H(+). The protein operates within lipid metabolism; glycerolipid metabolism. In terms of biological role, diacylglycerol kinase that converts diacylglycerol/DAG into phosphatidic acid/phosphatidate/PA and regulates the respective levels of these two bioactive lipids. Thereby, acts as a central switch between the signaling pathways activated by these second messengers with different cellular targets and opposite effects in numerous biological processes. Plays a key role in promoting cell growth. Activates the Ras/B-Raf/C-Raf/MEK/ERK signaling pathway induced by EGF. Regulates the recruitment of RAF1 and BRAF from cytoplasm to membranes and their heterodimerization. The sequence is that of Diacylglycerol kinase eta from Mus musculus (Mouse).